The following is a 202-amino-acid chain: uncharacterized protein (202 aa).

Disordered stretches follow at residues Met1–Gly32 and Pro46–Thr95. Positions Ser47–Ser79 are enriched in low complexity.

This is an uncharacterized protein from Equus caballus (Horse).